The sequence spans 953 residues: MSDKIIDFSKIEKDILKFWTENKIFELCNKLSQGREEYVFFDGPPFATGLPHYGHILSGTIKDIIGRFYYQKGFHVERRFGWDCHGLPVEYEIDKKFNITDRNQILKMGIDVYNHECRKIVQKYTNEWEETVIRMGRWVDFKGSYKTMDLEFMESIWFIFKELFKRNKIYRGFKIMPFSTACKTALSNFEASQNYKNVSDPSVLVTFKIINPKDVLHNYENNDIEIFFVAWTTTPWTLPANCALVINPDYEYAIFYINNNSKKLYIMLKNRIEVYFKQFCITTVILGKELIGVSYATLFNYYENYITRGFFKTIGGNFVTITDGSGIVHTAPAFGEEDYNIFLKLGLLKPDEIPPCHIDENGKFTIAMEKYVNVPINNDISLNGVYFKDADKIILQILKPHLIYNSRIVHSYPFCWRSDTPLLYKLIPNWFVKITDIREELLTQNKKINWIPETIKYKRFQNWLSNAKDWAISRNRFWGTPLPIWARYENEIYNYTDLICVGSIKELEDLTNTKITDLHREHIDQLLIEHNGKTYKRIEDVLDCWFESGSMPYAQNHLKGIKVNNSLIDKLDNINLNNAYLIKENFPADFIGEGLDQTRGWFYTLHVISTILFNSPAFKNVIVNGIVLAEDGKKMSKRLKNYPDPMNIFNKYGADALRMYLISSPVVEAENLRFNENGVKEILKTLLIPWYNTLVFYKECQIQNHNHTLLLDAWIESELNILINKVNIDMSEYKLNNILNYALDFIENLNNWYIRINRKELKNNGLYLKTIIKRFSIVMSAFVPFFSDYSYQIVCSDKISVHLEMIPEYKSINSDFNFIKCIIDGIRHLREKYKLKLKKTLKEVIIVLDNININKNLFEKYEAVIKSECNTLDIILNDINDYSISTIIKPNFKELNKNKNVIKEKLDIISKLTVNDIENIKNGTHDININELLIETYIKDIEYSGVFITLELF.

Residues 45 to 55 carry the 'HIGH' region motif; that stretch reads PFATGLPHYGH. The 'KMSKS' region signature appears at 634 to 638; the sequence is KMSKR. Residue lysine 637 participates in ATP binding.

The protein belongs to the class-I aminoacyl-tRNA synthetase family.

The protein localises to the cytoplasm. The enzyme catalyses tRNA(Ile) + L-isoleucine + ATP = L-isoleucyl-tRNA(Ile) + AMP + diphosphate. The chain is Probable isoleucine--tRNA ligase, cytoplasmic from Enterocytozoon bieneusi (strain H348) (Microsporidian parasite).